A 308-amino-acid chain; its full sequence is CASP-like protein 4A2 (308 aa).

The disordered stretch occupies residues 1-135; it reads MALEAQPSPS…APAPAPRVPA (135 aa). The Cytoplasmic portion of the chain corresponds to 1-161; sequence MALEAQPSPS…KRPTAVLQRT (161 aa). Gly residues predominate over residues 22-31; the sequence is GGAGAPGGSA. Residues 32–44 are compositionally biased toward low complexity; it reads GDADAQARRATSG. Pro residues-rich tracts occupy residues 54–65 and 89–132; these read RRSPPPPFPRTP and FQPP…PAPR. The chain crosses the membrane as a helical span at residues 162-182; sequence ALVARVAAALLCLAALAVLAA. At 183–203 the chain is on the extracellular side; that stretch reads DSRKGFALDSYSNYSQLRYSE. Residue N195 is glycosylated (N-linked (GlcNAc...) asparagine). The chain crosses the membrane as a helical span at residues 204–224; it reads AVNVIGFVYSVLQFFVLADLM. The Cytoplasmic portion of the chain corresponds to 225-240; it reads RRNKHLNPRRKGDYFD. A helical membrane pass occupies residues 241–262; that stretch reads FFMDQVLAYLLISSSSSATARV. At 263 to 280 the chain is on the extracellular side; that stretch reads GDWIDNWGSDPFPKMANS. N-linked (GlcNAc...) asparagine glycosylation is present at N279. Residues 281–301 form a helical membrane-spanning segment; the sequence is SIAISFMAFLVFAISALISAY. The Cytoplasmic segment spans residues 302 to 308; that stretch reads NLFRRDI.

The protein belongs to the Casparian strip membrane proteins (CASP) family. As to quaternary structure, homodimer and heterodimers.

The protein localises to the cell membrane. This chain is CASP-like protein 4A2, found in Oryza sativa subsp. japonica (Rice).